A 413-amino-acid polypeptide reads, in one-letter code: Multifunctional CCA protein (413 aa).

The ATP site is built by G8 and R11. CTP-binding residues include G8 and R11. Mg(2+)-binding residues include D21 and D23. ATP is bound by residues R91, R137, and R140. The CTP site is built by R91, R137, and R140. An HD domain is found at 228 to 329 (TGVHTLMTLS…VKLFDAIDAW (102 aa)).

It belongs to the tRNA nucleotidyltransferase/poly(A) polymerase family. Bacterial CCA-adding enzyme type 1 subfamily. As to quaternary structure, monomer. Can also form homodimers and oligomers. Mg(2+) serves as cofactor. Ni(2+) is required as a cofactor.

It catalyses the reaction a tRNA precursor + 2 CTP + ATP = a tRNA with a 3' CCA end + 3 diphosphate. The enzyme catalyses a tRNA with a 3' CCA end + 2 CTP + ATP = a tRNA with a 3' CCACCA end + 3 diphosphate. In terms of biological role, catalyzes the addition and repair of the essential 3'-terminal CCA sequence in tRNAs without using a nucleic acid template. Adds these three nucleotides in the order of C, C, and A to the tRNA nucleotide-73, using CTP and ATP as substrates and producing inorganic pyrophosphate. tRNA 3'-terminal CCA addition is required both for tRNA processing and repair. Also involved in tRNA surveillance by mediating tandem CCA addition to generate a CCACCA at the 3' terminus of unstable tRNAs. While stable tRNAs receive only 3'-terminal CCA, unstable tRNAs are marked with CCACCA and rapidly degraded. In Salmonella typhimurium (strain LT2 / SGSC1412 / ATCC 700720), this protein is Multifunctional CCA protein.